A 760-amino-acid polypeptide reads, in one-letter code: Transglutaminase-activating metalloprotease (760 aa).

The signal sequence occupies residues 1–33; it reads MRPTPQRRAVATGALVAVTAMLAVGVQTTSANA. Disordered stretches follow at residues 32–59 and 228–265; these read NAGQ…PVKL and KQGT…KTYN. Residues 34–229 constitute a propeptide that is removed on maturation; sequence GQDKAAHPAP…KLFEFQGVKQ (196 aa). A compositionally biased stretch (polar residues) spans 228–257; sequence KQGTGNSQHSGQVQIGTTKSGSSYQMNDTT. His-366 is a binding site for Zn(2+). Glu-367 is an active-site residue. 2 residues coordinate Zn(2+): His-370 and Glu-390. The Proton donor role is filled by His-454. The P/Homo B domain maps to 640–760; sequence TVNTTGGGSV…GTIDKWRLTF (121 aa).

It belongs to the peptidase M4 family. It depends on Zn(2+) as a cofactor.

Its subcellular location is the secreted. In terms of biological role, cleaves the N-terminal propeptide of transglutaminase thus activating it. The sequence is that of Transglutaminase-activating metalloprotease from Streptomyces mobaraensis (Streptoverticillium mobaraense).